Consider the following 95-residue polypeptide: Co-chaperonin GroES (95 aa).

Belongs to the GroES chaperonin family. Heptamer of 7 subunits arranged in a ring. Interacts with the chaperonin GroEL.

The protein localises to the cytoplasm. Together with the chaperonin GroEL, plays an essential role in assisting protein folding. The GroEL-GroES system forms a nano-cage that allows encapsulation of the non-native substrate proteins and provides a physical environment optimized to promote and accelerate protein folding. GroES binds to the apical surface of the GroEL ring, thereby capping the opening of the GroEL channel. The protein is Co-chaperonin GroES of Rickettsia typhi (strain ATCC VR-144 / Wilmington).